The sequence spans 313 residues: Ribosomal RNA small subunit methyltransferase H (313 aa).

S-adenosyl-L-methionine is bound by residues 35 to 37 (GGH), D55, F79, D101, and Q108.

The protein belongs to the methyltransferase superfamily. RsmH family.

Its subcellular location is the cytoplasm. It catalyses the reaction cytidine(1402) in 16S rRNA + S-adenosyl-L-methionine = N(4)-methylcytidine(1402) in 16S rRNA + S-adenosyl-L-homocysteine + H(+). Specifically methylates the N4 position of cytidine in position 1402 (C1402) of 16S rRNA. This Escherichia coli O139:H28 (strain E24377A / ETEC) protein is Ribosomal RNA small subunit methyltransferase H.